Consider the following 155-residue polypeptide: Ribosome maturation factor RimP (155 aa).

Belongs to the RimP family.

It localises to the cytoplasm. In terms of biological role, required for maturation of 30S ribosomal subunits. This chain is Ribosome maturation factor RimP, found in Prochlorococcus marinus (strain SARG / CCMP1375 / SS120).